Here is a 430-residue protein sequence, read N- to C-terminus: Maltoporin (430 aa).

The signal sequence occupies residues 1 to 23; it reads MNNKKTLLAVAISGMMFATSAAA.

The protein belongs to the porin LamB (TC 1.B.3) family. As to quaternary structure, homotrimer formed of three 18-stranded antiparallel beta-barrels, containing three independent channels.

The protein resides in the cell outer membrane. The catalysed reaction is beta-maltose(in) = beta-maltose(out). In terms of biological role, involved in the transport of maltose and maltodextrins. The protein is Maltoporin of Actinobacillus succinogenes (strain ATCC 55618 / DSM 22257 / CCUG 43843 / 130Z).